The sequence spans 432 residues: MSELKDCPLQFHDFKSVDHIKLCPRYTAVLSRSEDDGIGIEELDTLQLELETLLSSASRRLRVLEAETQILTDWQDKKGDRRFLKLGKEHELGTPIKHSKPKKQKLDGKVSHASGPGPGRPKSRNMQQKMQEYEFTDDPVDVPRIPKNDAPNRFWASVEPYCADITNDEIKVLEDLLKTPEDEADYYKIPPLGKHYSQRWAQEDLLEEQKDGARAALSGDKKKGILGPLAELDSKDVDSLLKKSDSQHDQPEDGCPFGHLTQRLLQALVEENIISPVEDSPIPEISGKESGTDGASTSPRSQNKPFSAPHTKSLEVRVKEELIAQGLLESDDRPADDSEDEVLAELRKRQAELKALSAHNRAKKQELLRLAKEEMNRQELRQRVRMADNEVMDAFRKIMAARQKKRTPTKKEKDQAWKALKERESILKLLDG.

Disordered stretches follow at residues 90–127 (HELG…RNMQ) and 275–314 (SPVE…TKSL). Residues 293–305 (DGASTSPRSQNKP) show a composition bias toward polar residues. Residues 335 to 398 (ADDSEDEVLA…NEVMDAFRKI (64 aa)) adopt a coiled-coil conformation.

The protein belongs to the NGG1 family.

It localises to the nucleus. Functionally, functions as a component of the PCAF complex. The PCAF complex is capable of efficiently acetylating histones in a nucleosomal context. This Xenopus laevis (African clawed frog) protein is Transcriptional adapter 3-A (tada3-a).